A 370-amino-acid chain; its full sequence is Dual-specificity RNA methyltransferase RlmN (370 aa).

The active-site Proton acceptor is the E93. Residues 99–337 enclose the Radical SAM core domain; it reads EEGRGTLCVS…VTTVRKTRGD (239 aa). Residues C106 and C343 are joined by a disulfide bond. Residues C113, C117, and C120 each coordinate [4Fe-4S] cluster. S-adenosyl-L-methionine is bound by residues 167-168, S199, 221-223, and N300; these read GE and SLH. C343 (S-methylcysteine intermediate) is an active-site residue.

It belongs to the radical SAM superfamily. RlmN family. [4Fe-4S] cluster is required as a cofactor.

Its subcellular location is the cytoplasm. The enzyme catalyses adenosine(2503) in 23S rRNA + 2 reduced [2Fe-2S]-[ferredoxin] + 2 S-adenosyl-L-methionine = 2-methyladenosine(2503) in 23S rRNA + 5'-deoxyadenosine + L-methionine + 2 oxidized [2Fe-2S]-[ferredoxin] + S-adenosyl-L-homocysteine. The catalysed reaction is adenosine(37) in tRNA + 2 reduced [2Fe-2S]-[ferredoxin] + 2 S-adenosyl-L-methionine = 2-methyladenosine(37) in tRNA + 5'-deoxyadenosine + L-methionine + 2 oxidized [2Fe-2S]-[ferredoxin] + S-adenosyl-L-homocysteine. Functionally, specifically methylates position 2 of adenine 2503 in 23S rRNA and position 2 of adenine 37 in tRNAs. m2A2503 modification seems to play a crucial role in the proofreading step occurring at the peptidyl transferase center and thus would serve to optimize ribosomal fidelity. The polypeptide is Dual-specificity RNA methyltransferase RlmN (Francisella tularensis subsp. tularensis (strain WY96-3418)).